Consider the following 195-residue polypeptide: Large ribosomal subunit protein bL9 (195 aa).

The protein belongs to the bacterial ribosomal protein bL9 family.

In terms of biological role, binds to the 23S rRNA. This is Large ribosomal subunit protein bL9 from Rhodopseudomonas palustris (strain TIE-1).